The sequence spans 537 residues: Cytochrome P450 monooxygenase AOL_s00215g282 (537 aa).

A helical membrane pass occupies residues Ala-9–Val-29. An N-linked (GlcNAc...) asparagine glycan is attached at Asn-126. Cys-451 provides a ligand contact to heme.

The protein belongs to the cytochrome P450 family. The cofactor is heme.

Its subcellular location is the membrane. It functions in the pathway secondary metabolite biosynthesis; terpenoid biosynthesis. Cytochrome P450 monooxygenase; part of the gene cluster that mediates the biosynthesis of sesquiterpenyl epoxy-cyclohexenoids (SECs) such as anthrobotrisins and arthrosporols, metabolites that possess a novel hybrid carbon skeleton consisting of a polyketide-derived epoxycyclohexenol combined with a terpenoid-derived monocyclic sesquiterpenol substructure (PKS-PTS hybrid). The SEC pathway plays an important role for fungal soil colonization via decreasing fungal nematode-capturing ability. Within the pathway, the cytochrome P450 monooxygenase AOL_s00215g282 acts as a m-cresol hydrolase that converts m-cresol to toluquinol. The pathway begins with the biosynthesis of 6-methylsalicylic acid (6-MSA), the first precursor of the polyketide-derived epoxycyclohexenol in arthrosporols, by the polyketide synthase (PKS) AOL_s00215g283 via condensation of 1 acetate and 3 malonate units. The 6-methylsalicylic acid decarboxylase AOL_s00215g281 then catalyzes the decarboxylation of 6-methylsalicylic acid to yield m-cresol. The cytochrome P450 monooxygenase AOL_s00215g282 further oxidizes m-cresol to yield toluquinol. With the assistance of the oxidoreductase AOL_s00215g277, the polyprenyl transferase AOL_s00215g276 catalyzes the farnesylation of toluquinol to produce farnesyl hydroquinone, the hybrid precursor for biosynthesis of SECs. Farnesyl hydroquinone undergoes epoxidation and then subsequent dehydrogenation to form farnesyl epoxy-quinone, the first and simplest SEC. The cytochrome P450 monooxygenase AOL_s00215g278 and the FAD-dependent monooxygenase AOL_s00215g279 might be involved in the oxygenation of the phenol moiety, most likely in the epoxy formation. The cytochrome P450 monooxygenases AOL_s00215g274 and AOL_s00215g280 are involved in specific regional ketone reductions at respectively C-4 and C-1 of farnesyl epoxy-quinone PubMed:33823587. In Arthrobotrys oligospora (strain ATCC 24927 / CBS 115.81 / DSM 1491) (Nematode-trapping fungus), this protein is Cytochrome P450 monooxygenase AOL_s00215g282.